Reading from the N-terminus, the 1691-residue chain is Helicase SWR1 (1691 aa).

Residues 1–244 (MPETASTANV…ATSNSTNRSP (244 aa)) are disordered. Composition is skewed to basic and acidic residues over residues 14–23 (SDPDAIKTEQ) and 54–68 (ENHH…DERP). Positions 126–155 (LSKSRTSKRSTGANSNTKTEIHLTNGNSRK) are enriched in polar residues. Residues 232–243 (SRTATSNSTNRS) show a composition bias toward low complexity. In terms of domain architecture, HSA spans 335–409 (PEPAEEPPRQ…RAVWISRYRI (75 aa)). Disordered regions lie at residues 457 to 615 (QARQ…AGGL) and 628 to 801 (MNSE…NHKI). A compositionally biased stretch (acidic residues) spans 467–521 (QLSEEDGFDDLSDDMSMADDDELGLASGEDEDDEDGDADSDIMSSDEEEGDEEDQ). Low complexity predominate over residues 564-575 (VDTAQATATENA). 2 stretches are compositionally biased toward acidic residues: residues 576–612 (ETSD…DEDA) and 645–662 (EMPD…EENE). Basic and acidic residues predominate over residues 671–692 (PEPHESGALEKSTKEAVEEKEQ). 2 stretches are compositionally biased toward polar residues: residues 706–722 (GLSN…SQDN) and 749–778 (PATN…TAST). The Helicase ATP-binding domain maps to 823–988 (AGLYANSTNG…WSLLFFLMPA (166 aa)). ATP is bound at residue 836–843 (DEMGLGKT). The DEAH box motif lies at 939–942 (DEAH). Residues 1375 to 1525 (ILDKLLRKLQ…DVVIQEGEFT (151 aa)) form the Helicase C-terminal domain. Disordered stretches follow at residues 1594 to 1632 (EIQA…GGLD) and 1669 to 1691 (DTKL…TRKR). A compositionally biased stretch (polar residues) spans 1605-1618 (KPSNNASGTSTARQ). Over residues 1677-1691 (DKKKGKKKGKDTRKR) the composition is skewed to basic residues.

Belongs to the SNF2/RAD54 helicase family. SWR1 subfamily. Component of the SWR1 chromatin-remodeling complex.

It localises to the nucleus. It carries out the reaction ATP + H2O = ADP + phosphate + H(+). In terms of biological role, catalytic component of the SWR1 complex which mediates the ATP-dependent exchange of histone H2A for the H2A variant HZT1 leading to transcriptional regulation of selected genes by chromatin remodeling. This Gibberella zeae (strain ATCC MYA-4620 / CBS 123657 / FGSC 9075 / NRRL 31084 / PH-1) (Wheat head blight fungus) protein is Helicase SWR1 (SWR1).